Reading from the N-terminus, the 595-residue chain is Chaperone protein HscA homolog (595 aa).

Belongs to the heat shock protein 70 family.

In terms of biological role, chaperone involved in the maturation of iron-sulfur cluster-containing proteins. Has a low intrinsic ATPase activity which is markedly stimulated by HscB. The sequence is that of Chaperone protein HscA homolog from Rickettsia rickettsii (strain Iowa).